The following is a 504-amino-acid chain: ATP synthase subunit alpha (504 aa).

169–176 (GDRQTGKT) contacts ATP.

The protein belongs to the ATPase alpha/beta chains family. As to quaternary structure, F-type ATPases have 2 components, CF(1) - the catalytic core - and CF(0) - the membrane proton channel. CF(1) has five subunits: alpha(3), beta(3), gamma(1), delta(1), epsilon(1). CF(0) has three main subunits: a(1), b(2) and c(9-12). The alpha and beta chains form an alternating ring which encloses part of the gamma chain. CF(1) is attached to CF(0) by a central stalk formed by the gamma and epsilon chains, while a peripheral stalk is formed by the delta and b chains.

It is found in the cell membrane. It catalyses the reaction ATP + H2O + 4 H(+)(in) = ADP + phosphate + 5 H(+)(out). Functionally, produces ATP from ADP in the presence of a proton gradient across the membrane. The alpha chain is a regulatory subunit. The sequence is that of ATP synthase subunit alpha from Clostridium botulinum (strain ATCC 19397 / Type A).